Reading from the N-terminus, the 248-residue chain is Cytochrome c oxidase subunit 2 (248 aa).

Positions 1-12 (MLLMNLFTIINN) are cleaved as a signal peptide. The Mitochondrial intermembrane segment spans residues 13–39 (DVPTPYNMYFQDSTTPHQEGILELHDN). A helical transmembrane segment spans residues 40–61 (IMFYMLTVLGLVSWMMIIIIKD). Residues 62-79 (YKNNPITYKYIKHGQMIE) lie on the Mitochondrial matrix side of the membrane. The helical transmembrane segment at 80–104 (IIWTILPAIILLMIAFPSFILLYLC) threads the bilayer. Over 105–248 (DEVISPAMTI…PTFLTWLNEQ (144 aa)) the chain is Mitochondrial intermembrane. Cu cation is bound by residues His-183, Cys-218, Glu-220, Cys-222, His-226, and Met-229. Mg(2+) is bound at residue Glu-220.

Belongs to the cytochrome c oxidase subunit 2 family. As to quaternary structure, component of the cytochrome c oxidase (complex IV, CIV), a multisubunit enzyme composed of a catalytic core of 3 subunits and several supernumerary subunits. The complex exists as a monomer or a dimer and forms supercomplexes (SCs) in the inner mitochondrial membrane with ubiquinol-cytochrome c oxidoreductase (cytochrome b-c1 complex, complex III, CIII). Cu cation is required as a cofactor. The signal sequence of COX2 is processed by IMP1.

The protein resides in the mitochondrion inner membrane. It catalyses the reaction 4 Fe(II)-[cytochrome c] + O2 + 8 H(+)(in) = 4 Fe(III)-[cytochrome c] + 2 H2O + 4 H(+)(out). In terms of biological role, component of the cytochrome c oxidase, the last enzyme in the mitochondrial electron transport chain which drives oxidative phosphorylation. The respiratory chain contains 3 multisubunit complexes succinate dehydrogenase (complex II, CII), ubiquinol-cytochrome c oxidoreductase (cytochrome b-c1 complex, complex III, CIII) and cytochrome c oxidase (complex IV, CIV), that cooperate to transfer electrons derived from NADH and succinate to molecular oxygen, creating an electrochemical gradient over the inner membrane that drives transmembrane transport and the ATP synthase. Cytochrome c oxidase is the component of the respiratory chain that catalyzes the reduction of oxygen to water. Electrons originating from reduced cytochrome c in the intermembrane space (IMS) are transferred via the dinuclear copper A center (CU(A)) of subunit 2 and heme A of subunit 1 to the active site in subunit 1, a binuclear center (BNC) formed by heme A3 and copper B (CU(B)). The BNC reduces molecular oxygen to 2 water molecules using 4 electrons from cytochrome c in the IMS and 4 protons from the mitochondrial matrix. The chain is Cytochrome c oxidase subunit 2 (COX2) from Eremothecium gossypii (strain ATCC 10895 / CBS 109.51 / FGSC 9923 / NRRL Y-1056) (Yeast).